The following is a 351-amino-acid chain: MSDERRLEVLRAIVRDYVSTREPVGSRALVERHALGVSPATIRNDMAALEESGYIAQPHTSAGRVPTDKGYRLFVDRLSTLKPLTPAERRAIEHLLDEAVDLDDVVDRTVRLLAQITHQVAVVQYPSLRRTTLRHIELVPMAPGRLLVVMIMDTGRVEQRTIELAADAAPDEAVVAELRARLNAVGAGRRMPRLGVELEMLPTYFAPADRPFVDAVNAVIAEALAEETEERIVMAGTANLARSDTDFPRTISPVLEALEEQVVLLRLLSEMALDAEEVRSERGDGISVRIGHENRHAGLAETSIVASGYGGVAADDAVAYLGVLGPTRMDYPTTMASVRAVARYLSRALGG.

Belongs to the HrcA family.

In terms of biological role, negative regulator of class I heat shock genes (grpE-dnaK-dnaJ and groELS operons). Prevents heat-shock induction of these operons. The sequence is that of Heat-inducible transcription repressor HrcA from Beutenbergia cavernae (strain ATCC BAA-8 / DSM 12333 / CCUG 43141 / JCM 11478 / NBRC 16432 / NCIMB 13614 / HKI 0122).